We begin with the raw amino-acid sequence, 1036 residues long: Isoleucine--tRNA ligase (1036 aa).

The 'HIGH' region signature appears at 46–56 (PFATGLPHYGH). A 'KMSKS' region motif is present at residues 589–593 (KMSKR). Lys592 is a binding site for ATP.

The protein belongs to the class-I aminoacyl-tRNA synthetase family. IleS type 2 subfamily. Monomer. The cofactor is Zn(2+).

It is found in the cytoplasm. It catalyses the reaction tRNA(Ile) + L-isoleucine + ATP = L-isoleucyl-tRNA(Ile) + AMP + diphosphate. Catalyzes the attachment of isoleucine to tRNA(Ile). As IleRS can inadvertently accommodate and process structurally similar amino acids such as valine, to avoid such errors it has two additional distinct tRNA(Ile)-dependent editing activities. One activity is designated as 'pretransfer' editing and involves the hydrolysis of activated Val-AMP. The other activity is designated 'posttransfer' editing and involves deacylation of mischarged Val-tRNA(Ile). In Chlamydia trachomatis serovar A (strain ATCC VR-571B / DSM 19440 / HAR-13), this protein is Isoleucine--tRNA ligase.